A 323-amino-acid chain; its full sequence is Elongation factor P--(R)-beta-lysine ligase (323 aa).

Position 76–78 (76–78 (SPE)) interacts with substrate. ATP contacts are provided by residues 100 to 102 (RNE) and Asn-109. Tyr-118 is a binding site for substrate. An ATP-binding site is contributed by 242–243 (EL). Glu-249 provides a ligand contact to substrate. An ATP-binding site is contributed by Gly-298.

This sequence belongs to the class-II aminoacyl-tRNA synthetase family. EpmA subfamily. In terms of assembly, homodimer.

It carries out the reaction D-beta-lysine + L-lysyl-[protein] + ATP = N(6)-((3R)-3,6-diaminohexanoyl)-L-lysyl-[protein] + AMP + diphosphate + H(+). Its function is as follows. With EpmB is involved in the beta-lysylation step of the post-translational modification of translation elongation factor P (EF-P). Catalyzes the ATP-dependent activation of (R)-beta-lysine produced by EpmB, forming a lysyl-adenylate, from which the beta-lysyl moiety is then transferred to the epsilon-amino group of a conserved specific lysine residue in EF-P. This Haemophilus influenzae (strain ATCC 51907 / DSM 11121 / KW20 / Rd) protein is Elongation factor P--(R)-beta-lysine ligase.